The following is a 360-amino-acid chain: Peptide chain release factor 1 (360 aa).

Glutamine 235 carries the post-translational modification N5-methylglutamine. Residues 284-293 (QRRQQEESST) are compositionally biased toward basic and acidic residues. The segment at 284-311 (QRRQQEESSTRRNLLGSGDRSDRIRTYN) is disordered.

Belongs to the prokaryotic/mitochondrial release factor family. In terms of processing, methylated by PrmC. Methylation increases the termination efficiency of RF1.

Its subcellular location is the cytoplasm. Its function is as follows. Peptide chain release factor 1 directs the termination of translation in response to the peptide chain termination codons UAG and UAA. The sequence is that of Peptide chain release factor 1 from Sodalis glossinidius (strain morsitans).